The chain runs to 198 residues: Protein GrpE (198 aa).

The span at 1–18 (MSEQEQKVEIPEVEKQEE) shows a compositional bias: basic and acidic residues. A disordered region spans residues 1 to 33 (MSEQEQKVEIPEVEKQEEVVVEETQQAEHSQEF).

This sequence belongs to the GrpE family. As to quaternary structure, homodimer.

It is found in the cytoplasm. Participates actively in the response to hyperosmotic and heat shock by preventing the aggregation of stress-denatured proteins, in association with DnaK and GrpE. It is the nucleotide exchange factor for DnaK and may function as a thermosensor. Unfolded proteins bind initially to DnaJ; upon interaction with the DnaJ-bound protein, DnaK hydrolyzes its bound ATP, resulting in the formation of a stable complex. GrpE releases ADP from DnaK; ATP binding to DnaK triggers the release of the substrate protein, thus completing the reaction cycle. Several rounds of ATP-dependent interactions between DnaJ, DnaK and GrpE are required for fully efficient folding. This Haemophilus influenzae (strain ATCC 51907 / DSM 11121 / KW20 / Rd) protein is Protein GrpE.